Reading from the N-terminus, the 598-residue chain is Glutamine--fructose-6-phosphate aminotransferase [isomerizing] (598 aa).

The Nucleophile; for GATase activity role is filled by C2. The 217-residue stretch at 2 to 218 folds into the Glutamine amidotransferase type-2 domain; sequence CGIVGYIGNN…DLSLGYASKD (217 aa). SIS domains lie at 277–421 and 450–588; these read VFDE…KRNL and LSKR…VDMP. Catalysis depends on K593, which acts as the For Fru-6P isomerization activity.

In terms of assembly, homodimer.

The protein localises to the cytoplasm. It catalyses the reaction D-fructose 6-phosphate + L-glutamine = D-glucosamine 6-phosphate + L-glutamate. In terms of biological role, catalyzes the first step in hexosamine metabolism, converting fructose-6P into glucosamine-6P using glutamine as a nitrogen source. The sequence is that of Glutamine--fructose-6-phosphate aminotransferase [isomerizing] from Campylobacter jejuni subsp. jejuni serotype O:2 (strain ATCC 700819 / NCTC 11168).